The sequence spans 265 residues: Protein Rv2993c (265 aa).

A divalent metal cation-binding residues include E114, E116, and D145.

It in the C-terminal section; belongs to the FAH family. The cofactor is a divalent metal cation.

The protein is Protein Rv2993c of Mycobacterium tuberculosis (strain ATCC 25618 / H37Rv).